Consider the following 506-residue polypeptide: Hexokinase-6 (506 aa).

The chain crosses the membrane as a helical span at residues 6–26 (VVGTAVVVCAAAAAAVGVAVV). The region spanning 43–497 (RRAAAVIEEV…SGIGAALLAA (455 aa)) is the Hexokinase domain. A hexokinase small subdomain region spans residues 98-236 (TGDEHGLFYA…GLDMKVTALV (139 aa)). The ADP site is built by G112, T113, and N114. D-glucose-binding residues include T202, K203, N237, and D238. Residues 237–486 (NDTVGTLAGG…SSVVVKLAND (250 aa)) form a hexokinase large subdomain region. T261 contacts ADP. The D-glucose site is built by N264, E292, and E323. G451 provides a ligand contact to ADP.

The protein belongs to the hexokinase family. In terms of tissue distribution, expressed in roots, leaves, flowers, immature seeds and endosperm.

The protein localises to the plastid. The protein resides in the chloroplast outer membrane. It carries out the reaction a D-hexose + ATP = a D-hexose 6-phosphate + ADP + H(+). The catalysed reaction is D-fructose + ATP = D-fructose 6-phosphate + ADP + H(+). The enzyme catalyses D-glucose + ATP = D-glucose 6-phosphate + ADP + H(+). It functions in the pathway carbohydrate metabolism; hexose metabolism. The protein operates within carbohydrate degradation; glycolysis; D-glyceraldehyde 3-phosphate and glycerone phosphate from D-glucose: step 1/4. Fructose and glucose phosphorylating enzyme. Functions as a glucose sensor for plant growth and photosynthesis. This chain is Hexokinase-6 (HXK6), found in Oryza sativa subsp. japonica (Rice).